The primary structure comprises 141 residues: Phage-like element PBSX protein XkdS (141 aa).

This sequence to B.subtilis YqbS.

The sequence is that of Phage-like element PBSX protein XkdS (xkdS) from Bacillus subtilis (strain 168).